A 124-amino-acid chain; its full sequence is Small ribosomal subunit protein bS16 (124 aa).

The segment at 80 to 124 (AGLAKRPARNNPTKAQPGKKAQERAAEAKQKAEEAAAAASEAAAE) is disordered. Residues 99–113 (KAQERAAEAKQKAEE) show a composition bias toward basic and acidic residues. Residues 114-124 (AAAAASEAAAE) show a composition bias toward low complexity.

This sequence belongs to the bacterial ribosomal protein bS16 family.

The chain is Small ribosomal subunit protein bS16 from Rhizobium meliloti (strain 1021) (Ensifer meliloti).